A 115-amino-acid chain; its full sequence is Putative HNH nuclease YajD (115 aa).

The 49-residue stretch at 27-75 (CGRCSREFVYSNLRELTVHHIDHDHTNNPEDGSNWELLCLYCHDHEHSK) folds into the HNH domain.

The protein belongs to the HNH nuclease family.

The protein is Putative HNH nuclease YajD (yajD) of Escherichia coli O157:H7.